Consider the following 553-residue polypeptide: Arginine--tRNA ligase (553 aa).

The 'HIGH' region signature appears at 130 to 140 (ANPTGPVHLGG).

It belongs to the class-I aminoacyl-tRNA synthetase family. As to quaternary structure, monomer.

It localises to the cytoplasm. It carries out the reaction tRNA(Arg) + L-arginine + ATP = L-arginyl-tRNA(Arg) + AMP + diphosphate. The chain is Arginine--tRNA ligase from Saccharopolyspora erythraea (strain ATCC 11635 / DSM 40517 / JCM 4748 / NBRC 13426 / NCIMB 8594 / NRRL 2338).